The primary structure comprises 166 residues: Phosphopantetheine adenylyltransferase (166 aa).

Threonine 10 provides a ligand contact to substrate. ATP is bound by residues 10–11 (TF) and histidine 18. 3 residues coordinate substrate: lysine 42, leucine 75, and arginine 89. ATP is bound by residues 90-92 (GVR), glutamate 100, and 125-131 (YTYVAST).

Belongs to the bacterial CoaD family. Homohexamer. Requires Mg(2+) as cofactor.

Its subcellular location is the cytoplasm. The catalysed reaction is (R)-4'-phosphopantetheine + ATP + H(+) = 3'-dephospho-CoA + diphosphate. Its pathway is cofactor biosynthesis; coenzyme A biosynthesis; CoA from (R)-pantothenate: step 4/5. Its function is as follows. Reversibly transfers an adenylyl group from ATP to 4'-phosphopantetheine, yielding dephospho-CoA (dPCoA) and pyrophosphate. In Chlorobaculum parvum (strain DSM 263 / NCIMB 8327) (Chlorobium vibrioforme subsp. thiosulfatophilum), this protein is Phosphopantetheine adenylyltransferase.